A 161-amino-acid chain; its full sequence is Nucleotide-binding protein PFLU_4927 (161 aa).

The protein belongs to the YajQ family.

Its function is as follows. Nucleotide-binding protein. The chain is Nucleotide-binding protein PFLU_4927 from Pseudomonas fluorescens (strain SBW25).